We begin with the raw amino-acid sequence, 605 residues long: Adenine deaminase (605 aa).

Belongs to the metallo-dependent hydrolases superfamily. Adenine deaminase family. Mn(2+) serves as cofactor.

It carries out the reaction adenine + H2O + H(+) = hypoxanthine + NH4(+). The polypeptide is Adenine deaminase (Mesorhizobium japonicum (strain LMG 29417 / CECT 9101 / MAFF 303099) (Mesorhizobium loti (strain MAFF 303099))).